A 209-amino-acid chain; its full sequence is 60S ribosomal subunit assembly/export protein loc-1 (209 aa).

Disordered regions lie at residues 1–53 (MAPT…SKGR) and 135–209 (REAR…AAPE). Basic and acidic residues-rich tracts occupy residues 20-33 (GSKDAERSRNDGVL) and 135-159 (REARRAEAEKKEAERKARLEETKDS). The stretch at 126-170 (IKARQMEEIREARRAEAEKKEAERKARLEETKDSLRKKRKRSKQS) forms a coiled coil.

Belongs to the LOC1 family. Component of the 66S pre-ribosomal particle.

The protein resides in the nucleus. Its subcellular location is the nucleolus. Functionally, required for efficient assembly and nuclear export of the 60S ribosomal subunit. The polypeptide is 60S ribosomal subunit assembly/export protein loc-1 (loc-1) (Neurospora crassa (strain ATCC 24698 / 74-OR23-1A / CBS 708.71 / DSM 1257 / FGSC 987)).